Here is a 474-residue protein sequence, read N- to C-terminus: ATP synthase subunit beta (474 aa).

An ATP-binding site is contributed by 153 to 160 (GGAGVGKT).

Belongs to the ATPase alpha/beta chains family. F-type ATPases have 2 components, CF(1) - the catalytic core - and CF(0) - the membrane proton channel. CF(1) has five subunits: alpha(3), beta(3), gamma(1), delta(1), epsilon(1). CF(0) has three main subunits: a(1), b(2) and c(9-12). The alpha and beta chains form an alternating ring which encloses part of the gamma chain. CF(1) is attached to CF(0) by a central stalk formed by the gamma and epsilon chains, while a peripheral stalk is formed by the delta and b chains.

It localises to the cell inner membrane. The enzyme catalyses ATP + H2O + 4 H(+)(in) = ADP + phosphate + 5 H(+)(out). In terms of biological role, produces ATP from ADP in the presence of a proton gradient across the membrane. The catalytic sites are hosted primarily by the beta subunits. The chain is ATP synthase subunit beta from Rickettsia prowazekii (strain Madrid E).